Here is a 162-residue protein sequence, read N- to C-terminus: Protein A49 (162 aa).

The protein belongs to the poxviridae A49 protein family.

The sequence is that of Protein A49 from Variola virus (isolate Human/India/Ind3/1967) (VARV).